A 96-amino-acid polypeptide reads, in one-letter code: uncharacterized protein (96 aa).

The protein localises to the mitochondrion. This is an uncharacterized protein from Schizosaccharomyces pombe (strain 972 / ATCC 24843) (Fission yeast).